The sequence spans 475 residues: WASH complex subunit 1 (475 aa).

Residues 1-54 (MTAVKTQHSLAGQVYAVPLIQPDLRREEAIQQVADALQYLQNISGDIFSRISQR) are required for WASH complex assembly. Residues 1-167 (MTAVKTQHSL…EGLGGLPSNI (167 aa)) are WHD1. Lys-219 is covalently cross-linked (Glycyl lysine isopeptide (Lys-Gly) (interchain with G-Cter in ubiquitin)). The disordered stretch occupies residues 296–475 (EDGALLAPPP…GDEDEDDWES (180 aa)). Pro residues predominate over residues 302-318 (APPPPPPPPPPPPPPAP). The interval 357–475 (QGAPKEVVDP…GDEDEDDWES (119 aa)) is VCA. Positions 369 to 391 (GRATLLESIRQAGGIGKAKLRSV) constitute a WH2 domain. Positions 390–406 (SVKERKLEKKKQKEQEQ) are enriched in basic and acidic residues. Residues 432–446 (SGKGPGTGTSEGPGG) are compositionally biased toward gly residues. Acidic residues predominate over residues 466–475 (GDEDEDDWES).

It belongs to the WASH1 family. Component of the WASH core complex also described as WASH regulatory complex SHRC composed of WASHC1, WASHC2, WASHC3, WASHC4 and WASHC5. The WASH core complex associates with the F-actin-capping protein dimer (formed by CAPZA1, CAPZA2 or CAPZA3 and CAPZB) in a transient or substoichiometric manner which was initially described as WASH complex. Interacts (via WHD1 region) with WASHC2; the interaction is direct. Interacts with BECN1; WASHC1 and AMBRA1 can competitively interact with BECN1. Interacts with BLOC1S2; may associate with the BLOC-1 complex. Interacts with tubulin gamma chain (TUBG1 or TUBG2). Interacts with TBC1D23. Post-translationally, ubiquitinated at Lys-219 via 'Lys-63'-linked ubiquitin chains by the TRIM27:MAGEL2 E3 ubiquitin ligase complex, leading to promote endosomal F-actin assembly.

It localises to the early endosome membrane. The protein localises to the recycling endosome membrane. In terms of biological role, acts as a component of the WASH core complex that functions as a nucleation-promoting factor (NPF) at the surface of endosomes, where it recruits and activates the Arp2/3 complex to induce actin polymerization, playing a key role in the fission of tubules that serve as transport intermediates during endosome sorting. Regulates the trafficking of endosomal alpha5beta1 integrin to the plasma membrane and involved in invasive cell migration. In T-cells involved in endosome-to-membrane recycling of receptors including T-cell receptor (TCR), CD28 and ITGAL; proposed to be implicated in T-cell proliferation and effector function. In dendritic cells involved in endosome-to-membrane recycling of major histocompatibility complex (MHC) class II probably involving retromer and subsequently allowing antigen sampling, loading and presentation during T-cell activation. Involved in cytokinesis and following polar body extrusion during oocyte meiotic maturation. Involved in Arp2/3 complex-dependent actin assembly driving Salmonella typhimurium invasion independent of ruffling. Involved in the exocytosis of MMP14 leading to matrix remodeling during invasive migration and implicating late endosome-to-plasma membrane tubular connections and cooperation with the exocyst complex. Involved in negative regulation of autophagy independently from its role in endosomal sorting by inhibiting BECN1 ubiquitination to inactivate PIK3C3/Vps34 activity. This is WASH complex subunit 1 from Rattus norvegicus (Rat).